The chain runs to 152 residues: Ribonuclease H (152 aa).

The 142-residue stretch at 1–142 folds into the RNase H type-1 domain; it reads MKEVTIYTDG…CDELARAAIA (142 aa). Residues Asp-9, Glu-47, Asp-69, and Asp-134 each contribute to the Mg(2+) site.

Belongs to the RNase H family. Monomer. The cofactor is Mg(2+).

Its subcellular location is the cytoplasm. It catalyses the reaction Endonucleolytic cleavage to 5'-phosphomonoester.. In terms of biological role, endonuclease that specifically degrades the RNA of RNA-DNA hybrids. The protein is Ribonuclease H of Moorella thermoacetica (strain ATCC 39073 / JCM 9320).